Consider the following 145-residue polypeptide: Hemoglobin subunit beta-A (145 aa).

Residues 1–145 (MLTAEEKAAV…VANALAHRYH (145 aa)) enclose the Globin domain. Heme b is bound by residues His62 and His91.

Belongs to the globin family. As to quaternary structure, heterotetramer of two alpha chains and two beta chains. In terms of tissue distribution, red blood cells.

Its function is as follows. Involved in oxygen transport from the lung to the various peripheral tissues. The protein is Hemoglobin subunit beta-A of Bos javanicus (Wild banteng).